The chain runs to 533 residues: Bifunctional purine biosynthesis protein PurH (533 aa).

The MGS-like domain maps to Met1 to Val148.

It belongs to the PurH family.

The catalysed reaction is (6R)-10-formyltetrahydrofolate + 5-amino-1-(5-phospho-beta-D-ribosyl)imidazole-4-carboxamide = 5-formamido-1-(5-phospho-D-ribosyl)imidazole-4-carboxamide + (6S)-5,6,7,8-tetrahydrofolate. It carries out the reaction IMP + H2O = 5-formamido-1-(5-phospho-D-ribosyl)imidazole-4-carboxamide. Its pathway is purine metabolism; IMP biosynthesis via de novo pathway; 5-formamido-1-(5-phospho-D-ribosyl)imidazole-4-carboxamide from 5-amino-1-(5-phospho-D-ribosyl)imidazole-4-carboxamide (10-formyl THF route): step 1/1. It participates in purine metabolism; IMP biosynthesis via de novo pathway; IMP from 5-formamido-1-(5-phospho-D-ribosyl)imidazole-4-carboxamide: step 1/1. This is Bifunctional purine biosynthesis protein PurH from Colwellia psychrerythraea (strain 34H / ATCC BAA-681) (Vibrio psychroerythus).